We begin with the raw amino-acid sequence, 35 residues long: Sperm-specific protein Phi-1 (35 aa).

2 stretches are compositionally biased toward basic residues: residues 1 to 17 (PSPT…RSRS) and 25 to 35 (AAKRAKSKTAK). Residues 1–35 (PSPTRRSKSRSKSRSRSRSASAGKAAKRAKSKTAK) are disordered.

As to expression, sperm.

It is found in the nucleus. It localises to the chromosome. Its function is as follows. Involved in nuclear basic protein transition: histones are replaced by spermatid specific proteins which are themselves replaced by protamines in late spermatids. In Mytilus californianus (California mussel), this protein is Sperm-specific protein Phi-1.